Reading from the N-terminus, the 520-residue chain is L-cysteine:1D-myo-inositol 2-amino-2-deoxy-alpha-D-glucopyranoside ligase (520 aa).

A Zn(2+)-binding site is contributed by C48. L-cysteinyl-5'-AMP contacts are provided by residues 48–51 (CGIT), T63, and 86–88 (NVT). A 'HIGH' region motif is present at residues 50-60 (ITPYDSTHLGH). The 'ERGGDP' region motif lies at 192–197 (ERGGDP). W232 is a binding site for L-cysteinyl-5'-AMP. C236 lines the Zn(2+) pocket. Residue 254–256 (GED) coordinates L-cysteinyl-5'-AMP. Position 261 (H261) interacts with Zn(2+). Position 288 (I288) interacts with L-cysteinyl-5'-AMP. The 'KMSKS' region motif lies at 294–298 (KMSKS).

Belongs to the class-I aminoacyl-tRNA synthetase family. MshC subfamily. In terms of assembly, monomer. It depends on Zn(2+) as a cofactor.

It catalyses the reaction 1D-myo-inositol 2-amino-2-deoxy-alpha-D-glucopyranoside + L-cysteine + ATP = 1D-myo-inositol 2-(L-cysteinylamino)-2-deoxy-alpha-D-glucopyranoside + AMP + diphosphate + H(+). Catalyzes the ATP-dependent condensation of GlcN-Ins and L-cysteine to form L-Cys-GlcN-Ins. This is L-cysteine:1D-myo-inositol 2-amino-2-deoxy-alpha-D-glucopyranoside ligase from Corynebacterium kroppenstedtii (strain DSM 44385 / JCM 11950 / CIP 105744 / CCUG 35717).